A 150-amino-acid polypeptide reads, in one-letter code: MQIILLDKVVNLGNLGEVVKVKDGYARNFLIPSGRARRATEANKAEFEAKRVELEKAAAAKLAEMQAQGEKLGGTTVKLTQKAGVDGRLFGSVTNHDISAELTKQGFPVLKSQIRMPNGPLKTVGDHAVSVALHTDVAVDITVTVYGETA.

Belongs to the bacterial ribosomal protein bL9 family.

Binds to the 23S rRNA. The protein is Large ribosomal subunit protein bL9 of Polaromonas sp. (strain JS666 / ATCC BAA-500).